The sequence spans 132 residues: Protein FAM174C (132 aa).

The signal sequence occupies residues 1 to 26 (MGPRVLQPPLLLLLLALLLAALPCGA). Positions 34 to 66 (PAQVTLSPPPAVTNGSQPGAPHNSTHTRPPGAS) are disordered. Positions 46–60 (TNGSQPGAPHNSTHT) are enriched in polar residues. N47 carries N-linked (GlcNAc...) asparagine glycosylation. The helical transmembrane segment at 73 to 93 (SFYVILGFCGLTALYFLIRAF) threads the bilayer. A Phosphothreonine modification is found at T113. The interval 113–132 (TEMASLDSDEETVFESRNLR) is disordered. S117 and S120 each carry phosphoserine.

The protein belongs to the FAM174 family.

The protein resides in the membrane. In Homo sapiens (Human), this protein is Protein FAM174C.